Reading from the N-terminus, the 466-residue chain is 3-isopropylmalate dehydratase large subunit (466 aa).

The [4Fe-4S] cluster site is built by Cys-347, Cys-407, and Cys-410.

This sequence belongs to the aconitase/IPM isomerase family. LeuC type 1 subfamily. As to quaternary structure, heterodimer of LeuC and LeuD. [4Fe-4S] cluster serves as cofactor.

The catalysed reaction is (2R,3S)-3-isopropylmalate = (2S)-2-isopropylmalate. The protein operates within amino-acid biosynthesis; L-leucine biosynthesis; L-leucine from 3-methyl-2-oxobutanoate: step 2/4. Catalyzes the isomerization between 2-isopropylmalate and 3-isopropylmalate, via the formation of 2-isopropylmaleate. This chain is 3-isopropylmalate dehydratase large subunit, found in Escherichia coli O9:H4 (strain HS).